We begin with the raw amino-acid sequence, 54 residues long: Small ribosomal subunit protein uS14 (54 aa).

The Zn(2+) site is built by cysteine 19, cysteine 22, cysteine 37, and cysteine 40.

It belongs to the universal ribosomal protein uS14 family. Zinc-binding uS14 subfamily. Part of the 30S ribosomal subunit. Requires Zn(2+) as cofactor.

Binds 16S rRNA, required for the assembly of 30S particles. The protein is Small ribosomal subunit protein uS14 of Sulfolobus acidocaldarius (strain ATCC 33909 / DSM 639 / JCM 8929 / NBRC 15157 / NCIMB 11770).